The following is a 179-amino-acid chain: Large ribosomal subunit protein uL22c (179 aa).

This sequence belongs to the universal ribosomal protein uL22 family. As to quaternary structure, part of the 50S ribosomal subunit.

It localises to the plastid. It is found in the chloroplast. This protein binds specifically to 23S rRNA. Its function is as follows. The globular domain of the protein is located near the polypeptide exit tunnel on the outside of the subunit, while an extended beta-hairpin is found that lines the wall of the exit tunnel in the center of the 70S ribosome. The chain is Large ribosomal subunit protein uL22c (rpl22) from Ranunculus macranthus (Large buttercup).